The chain runs to 77 residues: DNA-directed RNA polymerase subunit epsilon (77 aa).

This sequence belongs to the RNA polymerase subunit epsilon family. In terms of assembly, RNAP is composed of a core of 2 alpha, a beta and a beta' subunit. The core is associated with a delta subunit, and at least one of epsilon or omega. When a sigma factor is associated with the core the holoenzyme is formed, which can initiate transcription.

The enzyme catalyses RNA(n) + a ribonucleoside 5'-triphosphate = RNA(n+1) + diphosphate. A non-essential component of RNA polymerase (RNAP). The protein is DNA-directed RNA polymerase subunit epsilon of Lactobacillus delbrueckii subsp. bulgaricus (strain ATCC 11842 / DSM 20081 / BCRC 10696 / JCM 1002 / NBRC 13953 / NCIMB 11778 / NCTC 12712 / WDCM 00102 / Lb 14).